The chain runs to 327 residues: Phenylalanine--tRNA ligase alpha subunit (327 aa).

Residue Glu-252 coordinates Mg(2+).

Belongs to the class-II aminoacyl-tRNA synthetase family. Phe-tRNA synthetase alpha subunit type 1 subfamily. In terms of assembly, tetramer of two alpha and two beta subunits. The cofactor is Mg(2+).

It is found in the cytoplasm. The catalysed reaction is tRNA(Phe) + L-phenylalanine + ATP = L-phenylalanyl-tRNA(Phe) + AMP + diphosphate + H(+). The sequence is that of Phenylalanine--tRNA ligase alpha subunit from Shewanella baltica (strain OS185).